Consider the following 185-residue polypeptide: Translation initiation factor IF-3 (185 aa).

Belongs to the IF-3 family. As to quaternary structure, monomer.

The protein resides in the cytoplasm. Functionally, IF-3 binds to the 30S ribosomal subunit and shifts the equilibrium between 70S ribosomes and their 50S and 30S subunits in favor of the free subunits, thus enhancing the availability of 30S subunits on which protein synthesis initiation begins. The chain is Translation initiation factor IF-3 from Bacteroides thetaiotaomicron (strain ATCC 29148 / DSM 2079 / JCM 5827 / CCUG 10774 / NCTC 10582 / VPI-5482 / E50).